The chain runs to 190 residues: uncharacterized protein (190 aa).

The Cytoplasmic portion of the chain corresponds to 1–16 (MAILPEFISQTPPVTR). The chain crosses the membrane as a helical span at residues 17-37 (YIVLGTLFTTLAVNFGYVSDL). The Lumenal portion of the chain corresponds to 38–55 (KIFFNWKLFLAKGEYWRA). Residues 56–76 (ITTFLYVGPFGLELILYLSFL) traverse the membrane as a helical segment. Topologically, residues 77 to 98 (LRFMSMLERSSPPPQTQSFLKT) are cytoplasmic. The helical transmembrane segment at 99 to 119 (VLIVWFSLLVTSYFSYMPFAA) threads the bilayer. Over 120–138 (SYFSFTMLYIWSWKHPLYR) the chain is Lumenal. The chain crosses the membrane as a helical span at residues 139-159 (ISILGLFDVKAPYVPWVMVLL). At 160-163 (RWLR) the chain is on the cytoplasmic side. The chain crosses the membrane as a helical span at residues 164–184 (TGIFPLLDLISALIGHVYFFV). The Lumenal portion of the chain corresponds to 185 to 190 (TDFSTV).

Belongs to the derlin family.

It localises to the endoplasmic reticulum membrane. This is an uncharacterized protein from Schizosaccharomyces pombe (strain 972 / ATCC 24843) (Fission yeast).